Consider the following 367-residue polypeptide: 2-aminoethylphosphonate--pyruvate transaminase (367 aa).

Pyridoxal 5'-phosphate is bound by residues 65–67 (SGS), Tyr92, Thr143, and Asp168. Lys194 is modified (N6-(pyridoxal phosphate)lysine). Thr243 lines the pyridoxal 5'-phosphate pocket.

This sequence belongs to the class-V pyridoxal-phosphate-dependent aminotransferase family. PhnW subfamily. In terms of assembly, homodimer. It depends on pyridoxal 5'-phosphate as a cofactor.

The enzyme catalyses (2-aminoethyl)phosphonate + pyruvate = phosphonoacetaldehyde + L-alanine. Its function is as follows. Involved in phosphonate degradation. This is 2-aminoethylphosphonate--pyruvate transaminase (phnW) from Salmonella typhimurium (strain LT2 / SGSC1412 / ATCC 700720).